Consider the following 459-residue polypeptide: Hepatocyte nuclear factor 3-beta (459 aa).

A transactivation domain 1 region spans residues 14 to 93; the sequence is DWSSYYAEPE…AGAMAGMSGS (80 aa). A Nuclear localization signal motif is present at residues 106–113; sequence LSPSLSPL. Thr-156 carries the phosphothreonine modification. Residues 159 to 252 constitute a DNA-binding region (fork-head); it reads KPPYSYISLI…FENGCYLRRQ (94 aa). Phosphoserine is present on Ser-212. A compositionally biased stretch (low complexity) spans 268–281; that stretch reads GAASSGGKKTAPGS. Residues 268 to 366 are disordered; sequence GAASSGGKKT…PGLPPEAHLK (99 aa). Residue Ser-284 is modified to Phosphoserine. Positions 295 to 311 are enriched in polar residues; the sequence is ASETPAGTESPHSSASP. Residue Thr-302 is modified to Phosphothreonine. Phosphoserine occurs at positions 304, 307, 308, and 310. The segment covering 340–353 has biased composition (low complexity); sequence PGQQQQAAAHLLGP. The interval 362 to 459 is transactivation domain 2; that stretch reads EAHLKPEHHY…VYSRPIMNSS (98 aa). Residues Ser-438 and Ser-459 each carry the phosphoserine modification.

As to quaternary structure, binds DNA as a monomer. Binds TLE1. Interacts with FOXA1 and FOXA3. Interacts with PRKDC. Interacts with AKT1. Interacts with TET1; this interaction may recruit TET1 to specific genomic loci to mediate their demethylation. Phosphorylation on Thr-156 abolishes binding to target promoters and subsequent transcription activation upon insulin stimulation. Restricted mainly to endoderm-derived tissues (lung, liver, stomach, and small intestine). Expressed in epididymis with region-specific expression pattern: no expression is observed in initial segment, low expression in proximal caput, gradiently higher levels of expression in middle and distal caput and highest level in corpus and cauda (at protein level).

Its subcellular location is the nucleus. The protein localises to the cytoplasm. Functionally, transcription factor that is involved in embryonic development, establishment of tissue-specific gene expression and regulation of gene expression in differentiated tissues. Is thought to act as a 'pioneer' factor opening the compacted chromatin for other proteins through interactions with nucleosomal core histones and thereby replacing linker histones at target enhancer and/or promoter sites. Binds DNA with the consensus sequence 5'-[AC]A[AT]T[AG]TT[GT][AG][CT]T[CT]-3'. In embryonic development is required for notochord formation. Involved in the development of multiple endoderm-derived organ systems such as the liver, pancreas and lungs; Foxa1 and Foxa2 seem to have at least in part redundant roles. FOXA1 and FOXA2 are essential for hepatic specification. FOXA1 and FOXA2 are required for morphogenesis and cell differentiation during formation of the lung. FOXA1 and FOXA2 are involved in bile duct formation; they positively regulate the binding glucocorticoid receptor/NR3C1 to the IL6 promoter. FOXA1 and FOXA2 regulate multiple phases of midbrain dopaminergic neuron development; they regulate expression of NEUROG2 at the beginning of mDA neurogenesis and of NR4A2 and EN1 in immature mDA neurons. Modulates the transcriptional activity of nuclear hormone receptors; inhibits AR-mediated transcription from the LCN5 promoter. Binds to fibrinogen beta promoter and is involved in IL6-induced fibrinogen beta transcriptional activation. Originally described as a transcription activator for a number of liver genes such as AFP, albumin, tyrosine aminotransferase, PEPCK, etc. Interacts with the cis-acting regulatory regions of these genes. Involved in glucose homeostasis; regulates the expression of genes important for glucose sensing in pancreatic beta-cells and glucose homeostasis. In pancreatic beta cells activates transcription of potassium channel subunits KCNJ11 and ABCC8. Involved in regulation of fat metabolism; activates transcriptional programs of lipid metabolism and ketogenesis at low insulin state. Involved in transcriptional regulation of MUC2 in the intestine. The polypeptide is Hepatocyte nuclear factor 3-beta (Foxa2) (Mus musculus (Mouse)).